A 93-amino-acid polypeptide reads, in one-letter code: Bombyxin B-11 (93 aa).

The first 22 residues, 1-22 (MMKTAVMFILVVVISLTYSSEE), serve as a signal peptide directing secretion. Disulfide bonds link cysteine 30/cysteine 75, cysteine 42/cysteine 92, and cysteine 74/cysteine 79. Residues 49–64 (GGAQYAPYWQETYLRS) constitute a propeptide, bombyxin B-11 C peptide.

This sequence belongs to the insulin family. Heterodimer of a B chain and an A chain linked by two disulfide bonds.

It is found in the secreted. In terms of biological role, brain peptide responsible for activation of prothoracic glands to produce ecdysone in insects. The protein is Bombyxin B-11 (BBXB11) of Bombyx mori (Silk moth).